A 526-amino-acid chain; its full sequence is Catalase (526 aa).

Residues 1–22 (MADDREKSTDQMKLWKEGRGSQ) show a composition bias toward basic and acidic residues. A disordered region spans residues 1-29 (MADDREKSTDQMKLWKEGRGSQRPDVLTT). Residues His-75 and Asn-148 contribute to the active site. The NADP(+) site is built by His-194, Ser-201, Arg-203, Asn-213, Lys-237, Trp-303, His-305, and Lys-306. Heme is bound at residue Tyr-358.

This sequence belongs to the catalase family. Homotetramer. Heme serves as cofactor. It depends on NADP(+) as a cofactor.

It is found in the peroxisome matrix. It catalyses the reaction 2 H2O2 = O2 + 2 H2O. Functionally, catalyzes the degradation of hydrogen peroxide (H(2)O(2)) generated by peroxisomal oxidases to water and oxygen, thereby protecting cells from the toxic effects of hydrogen peroxide. The chain is Catalase (cat) from Danio rerio (Zebrafish).